The chain runs to 451 residues: Opioid growth factor receptor-like protein 1 (451 aa).

Disordered regions lie at residues 1–89 and 308–451; these read MGNL…TAKP and ENFI…VLVQ. Low complexity predominate over residues 43 to 66; sequence PGQESEQPAQPPEQAGGRPGASPA. Positions 322 to 341 are enriched in polar residues; sequence GSKAQKMSSPLASSHNSQTS. Composition is skewed to basic and acidic residues over residues 362-381 and 389-399; these read TAED…DRPS and AKPRNTEKDSN. Residues 431–443 show a composition bias toward low complexity; that stretch reads NDNQDNENPGNTN.

Belongs to the opioid growth factor receptor family. Ubiquitous.

This chain is Opioid growth factor receptor-like protein 1 (OGFRL1), found in Homo sapiens (Human).